The following is a 570-amino-acid chain: Set1/Ash2 histone methyltransferase complex subunit ash-2 (570 aa).

The PHD-type zinc-finger motif lies at 19-76 (TTVCYCDGKRELGSVEVVCSTCLKWFHGRCLKEFHELNSNGVPFMICYTFTCKQCRPT). The tract at residues 201–242 (NREPRHIELPPIEGPKTRGASKRRHAEAPVTGKKQKLAADYS) is disordered. The 199-residue stretch at 270 to 468 (PNVPEDPAWN…TLVEMPGSYI (199 aa)) folds into the B30.2/SPRY domain.

As to quaternary structure, component of the SET2 complex (also known as the SET1/COMPASS complex), which contains at least set-2, swd-2.1, cfp-1, rbbp-5, wdr-5.1, dpy-30 and ash-2. Within the complex, interacts with cfp-1 and wdr-5.1. In terms of tissue distribution, expressed in somatic and germline tissues (at protein level).

It localises to the nucleus. Its function is as follows. Component of the set-2/ash-2 histone methyltransferase (HMT) complex. Required for the di- and trimethylation at 'Lys-4' of histone H3, a mark associated with epigenetic transcriptional activation. Implicated in the epigenetic inheritance of lifespan over several generations. Functions as a transcriptional regulator. Acts in the germline to limit the longevity of the soma, probably by regulating a lipid metabolism pathway that signals from the germline to the intestine, thereby preventing accumulation of mono-unsaturated fatty acids. This Caenorhabditis elegans protein is Set1/Ash2 histone methyltransferase complex subunit ash-2.